We begin with the raw amino-acid sequence, 338 residues long: Mitochondrial glutathione transporter SLC25A40 (338 aa).

Solcar repeat units lie at residues 13-131 (VTPL…LSAL), 139-223 (NETC…LKKW), and 233-327 (PTFM…GKAF). 6 helical membrane-spanning segments follow: residues 19–39 (MLAS…LDVV), 103–123 (LWSG…IYFT), 142–162 (CIPI…ISPL), 199–220 (WAPT…YEIL), 239–259 (FTSG…FDVV), and 298–318 (GLFS…AIMI).

The protein belongs to the mitochondrial carrier (TC 2.A.29) family.

The protein resides in the mitochondrion inner membrane. It carries out the reaction glutathione(in) = glutathione(out). In terms of biological role, probable mitochondrial transporter required for glutathione import into mitochondria. Glutathione, which plays key roles in oxidative metabolism, is produced exclusively in the cytosol and is imported in many organelles. Mitochondrial glutathione is required for the activity and stability of proteins containing iron-sulfur clusters, as well as erythropoiesis. This is Mitochondrial glutathione transporter SLC25A40 from Homo sapiens (Human).